A 140-amino-acid chain; its full sequence is Nucleoside diphosphate kinase (140 aa).

The ATP site is built by K11, F59, R87, T93, R104, and N114. H117 acts as the Pros-phosphohistidine intermediate in catalysis.

Belongs to the NDK family. In terms of assembly, homotetramer. Mg(2+) is required as a cofactor.

Its subcellular location is the cytoplasm. The enzyme catalyses a 2'-deoxyribonucleoside 5'-diphosphate + ATP = a 2'-deoxyribonucleoside 5'-triphosphate + ADP. It catalyses the reaction a ribonucleoside 5'-diphosphate + ATP = a ribonucleoside 5'-triphosphate + ADP. Major role in the synthesis of nucleoside triphosphates other than ATP. The ATP gamma phosphate is transferred to the NDP beta phosphate via a ping-pong mechanism, using a phosphorylated active-site intermediate. The polypeptide is Nucleoside diphosphate kinase (Rickettsia bellii (strain OSU 85-389)).